A 120-amino-acid polypeptide reads, in one-letter code: NAD(P)H-quinone oxidoreductase subunit 3, chloroplastic (120 aa).

3 helical membrane passes run 9–29, 64–84, and 88–108; these read IFWA…LISG, MFAL…PWAM, and VLGV…IIGS.

It belongs to the complex I subunit 3 family. As to quaternary structure, NDH is composed of at least 16 different subunits, 5 of which are encoded in the nucleus.

Its subcellular location is the plastid. It localises to the chloroplast thylakoid membrane. It catalyses the reaction a plastoquinone + NADH + (n+1) H(+)(in) = a plastoquinol + NAD(+) + n H(+)(out). The catalysed reaction is a plastoquinone + NADPH + (n+1) H(+)(in) = a plastoquinol + NADP(+) + n H(+)(out). Functionally, NDH shuttles electrons from NAD(P)H:plastoquinone, via FMN and iron-sulfur (Fe-S) centers, to quinones in the photosynthetic chain and possibly in a chloroplast respiratory chain. The immediate electron acceptor for the enzyme in this species is believed to be plastoquinone. Couples the redox reaction to proton translocation, and thus conserves the redox energy in a proton gradient. The chain is NAD(P)H-quinone oxidoreductase subunit 3, chloroplastic from Drimys granadensis.